The sequence spans 241 residues: Biosynthetic peptidoglycan transglycosylase (241 aa).

A helical transmembrane segment spans residues 18-38 (GVIGIIALWMAGILIFAFLPV).

This sequence belongs to the glycosyltransferase 51 family.

The protein localises to the cell inner membrane. The catalysed reaction is [GlcNAc-(1-&gt;4)-Mur2Ac(oyl-L-Ala-gamma-D-Glu-L-Lys-D-Ala-D-Ala)](n)-di-trans,octa-cis-undecaprenyl diphosphate + beta-D-GlcNAc-(1-&gt;4)-Mur2Ac(oyl-L-Ala-gamma-D-Glu-L-Lys-D-Ala-D-Ala)-di-trans,octa-cis-undecaprenyl diphosphate = [GlcNAc-(1-&gt;4)-Mur2Ac(oyl-L-Ala-gamma-D-Glu-L-Lys-D-Ala-D-Ala)](n+1)-di-trans,octa-cis-undecaprenyl diphosphate + di-trans,octa-cis-undecaprenyl diphosphate + H(+). It functions in the pathway cell wall biogenesis; peptidoglycan biosynthesis. Functionally, peptidoglycan polymerase that catalyzes glycan chain elongation from lipid-linked precursors. This Yersinia pseudotuberculosis serotype O:3 (strain YPIII) protein is Biosynthetic peptidoglycan transglycosylase.